We begin with the raw amino-acid sequence, 276 residues long: NAD kinase (276 aa).

The active-site Proton acceptor is the Asp66. Residues 66-67, 139-140, Asp168, 179-184, and Gln234 each bind NAD(+); these read DG, ND, and TAYNIS.

The protein belongs to the NAD kinase family. A divalent metal cation serves as cofactor.

It localises to the cytoplasm. It catalyses the reaction NAD(+) + ATP = ADP + NADP(+) + H(+). Its function is as follows. Involved in the regulation of the intracellular balance of NAD and NADP, and is a key enzyme in the biosynthesis of NADP. Catalyzes specifically the phosphorylation on 2'-hydroxyl of the adenosine moiety of NAD to yield NADP. The chain is NAD kinase from Campylobacter lari (strain RM2100 / D67 / ATCC BAA-1060).